We begin with the raw amino-acid sequence, 662 residues long: Tubulin--tyrosine ligase-like protein 12 (662 aa).

Positions 324–660 (LKKRKIKVYA…LDEIDPTKVT (337 aa)) constitute a TTL domain. ATP-binding positions include 472–475 (CEYI), lysine 491, and aspartate 493.

This sequence belongs to the tubulin--tyrosine ligase family.

In terms of biological role, regulates microtubule dynamics in uterine muscle cells. The sequence is that of Tubulin--tyrosine ligase-like protein 12 from Caenorhabditis elegans.